The sequence spans 757 residues: LPS-assembly protein LptD (757 aa).

The first 20 residues, 1–20 (MLQRFITSLMLLPFPGSALA), serve as a signal peptide directing secretion.

This sequence belongs to the LptD family. As to quaternary structure, component of the lipopolysaccharide transport and assembly complex. Interacts with LptE and LptA.

Its subcellular location is the cell outer membrane. In terms of biological role, together with LptE, is involved in the assembly of lipopolysaccharide (LPS) at the surface of the outer membrane. The chain is LPS-assembly protein LptD from Idiomarina loihiensis (strain ATCC BAA-735 / DSM 15497 / L2-TR).